Consider the following 497-residue polypeptide: Glucose-6-phosphate 1-dehydrogenase (497 aa).

NADP(+) contacts are provided by residues 17–24 (GASGDLAK), Arg51, and Lys151. D-glucose 6-phosphate is bound by residues Lys151, 181–185 (HYLGK), Glu219, and Asp238. His243 acts as the Proton acceptor in catalysis. Lys334 lines the NADP(+) pocket. Residues Lys337 and Arg342 each contribute to the D-glucose 6-phosphate site. Residues Lys343, Arg347, and Arg371 each contribute to the NADP(+) site. Residue Gln373 coordinates D-glucose 6-phosphate. NADP(+) is bound by residues 379 to 381 (YLK), 399 to 401 (DLS), Arg465, and Trp487.

This sequence belongs to the glucose-6-phosphate dehydrogenase family.

The protein localises to the cytoplasm. The protein resides in the cytosol. The catalysed reaction is D-glucose 6-phosphate + NADP(+) = 6-phospho-D-glucono-1,5-lactone + NADPH + H(+). It participates in carbohydrate degradation; pentose phosphate pathway; D-ribulose 5-phosphate from D-glucose 6-phosphate (oxidative stage): step 1/3. In terms of biological role, cytosolic glucose-6-phosphate dehydrogenase that catalyzes the first and rate-limiting step of the oxidative branch within the pentose phosphate pathway/shunt, an alternative route to glycolysis for the dissimilation of carbohydrates and a major source of reducing power and metabolic intermediates for fatty acid and nucleic acid biosynthetic processes. The sequence is that of Glucose-6-phosphate 1-dehydrogenase (g6pd-1) from Dictyostelium discoideum (Social amoeba).